The primary structure comprises 276 residues: Large ribosomal subunit protein uL2 (276 aa).

Disordered regions lie at residues 1-20 and 219-276; these read MGIKKYNPTTNGRRNMTTND and TVRG…RRKK. The span at 7 to 20 shows a compositional bias: polar residues; it reads NPTTNGRRNMTTND.

This sequence belongs to the universal ribosomal protein uL2 family. As to quaternary structure, part of the 50S ribosomal subunit. Forms a bridge to the 30S subunit in the 70S ribosome.

Its function is as follows. One of the primary rRNA binding proteins. Required for association of the 30S and 50S subunits to form the 70S ribosome, for tRNA binding and peptide bond formation. It has been suggested to have peptidyltransferase activity; this is somewhat controversial. Makes several contacts with the 16S rRNA in the 70S ribosome. This chain is Large ribosomal subunit protein uL2, found in Bacillus anthracis (strain A0248).